Here is a 629-residue protein sequence, read N- to C-terminus: Forkhead box protein O1-B (629 aa).

Disordered stretches follow at residues 1–54, 88–134, 211–308, and 359–397; these read MAEP…PEQG, CAHP…SRRN, SWWM…SPFL, and KNNT…QPQV. The span at 36 to 46 shows a compositional bias: polar residues; it reads QPGNSNTSSPA. 2 stretches are compositionally biased toward low complexity: residues 90-107 and 115-133; these read HPQQ…THPQ and PASG…SSRR. Positions 136–230 form a DNA-binding region, fork-head; that stretch reads WGNMSYADLI…KSGKSPRRRA (95 aa). The segment covering 240-251 has biased composition (basic residues); that stretch reads TKSRGRAAKKKM. 3 stretches are compositionally biased toward polar residues: residues 291-302, 359-377, and 385-397; these read TRASSDASTLSG, KNNT…SPLM, and SYTS…QPQV.

The protein resides in the cytoplasm. It is found in the nucleus. Its function is as follows. Transcription factor that regulates metabolic homeostasis in response to oxidative stress. Binds to the consensus sequence 5'-TT[G/A]TTTTG-3' and the related Daf-16 family binding element (DBE) with consensus sequence 5'-TT[G/A]TTTAC-3'. Main regulator of redox balance and osteoblast numbers and controls bone mass. Orchestrates the endocrine function of the skeleton in regulating glucose metabolism. May act as a positive regulator of apoptosis in cardiac smooth muscle cells as a result of its transcriptional activation of pro-apoptotic genes. The chain is Forkhead box protein O1-B (foxo1b) from Danio rerio (Zebrafish).